Here is a 419-residue protein sequence, read N- to C-terminus: uncharacterized protein (419 aa).

Transmembrane regions (helical) follow at residues 15 to 35 (RVLM…MPYL), 36 to 56 (ADYL…VMGV), 77 to 99 (YKPL…VVAQ), 104 to 126 (VLIA…RGYL), 140 to 160 (MFNV…LVLL), 166 to 186 (ITVL…LVAL), 213 to 233 (FLTL…IYLA), 246 to 266 (QYLL…GGQL), 282 to 302 (LVVG…IPNG), 309 to 329 (VAVM…AALF), 351 to 371 (FYST…GSLM), and 377 to 397 (LNTD…AVAG).

It belongs to the major facilitator superfamily.

Its subcellular location is the cell membrane. This is an uncharacterized protein from Mycobacterium tuberculosis (strain CDC 1551 / Oshkosh).